Reading from the N-terminus, the 166-residue chain is Desiccation-related protein At2g46140 (166 aa).

Belongs to the LEA type 2 family.

The chain is Desiccation-related protein At2g46140 from Arabidopsis thaliana (Mouse-ear cress).